The following is a 333-amino-acid chain: UDP-3-O-acylglucosamine N-acyltransferase 2 (333 aa).

The active-site Proton acceptor is the histidine 243.

The protein belongs to the transferase hexapeptide repeat family. LpxD subfamily. In terms of assembly, homotrimer.

It catalyses the reaction a UDP-3-O-[(3R)-3-hydroxyacyl]-alpha-D-glucosamine + a (3R)-hydroxyacyl-[ACP] = a UDP-2-N,3-O-bis[(3R)-3-hydroxyacyl]-alpha-D-glucosamine + holo-[ACP] + H(+). The protein operates within bacterial outer membrane biogenesis; LPS lipid A biosynthesis. Its function is as follows. Catalyzes the N-acylation of UDP-3-O-acylglucosamine using 3-hydroxyacyl-ACP as the acyl donor. Is involved in the biosynthesis of lipid A, a phosphorylated glycolipid that anchors the lipopolysaccharide to the outer membrane of the cell. The polypeptide is UDP-3-O-acylglucosamine N-acyltransferase 2 (Koribacter versatilis (strain Ellin345)).